Consider the following 193-residue polypeptide: Xanthine phosphoribosyltransferase (193 aa).

Xanthine contacts are provided by L20 and N27. 128-132 serves as a coordination point for 5-phospho-alpha-D-ribose 1-diphosphate; the sequence is ANGDA. K156 is a binding site for xanthine.

The protein belongs to the purine/pyrimidine phosphoribosyltransferase family. Xpt subfamily. In terms of assembly, homodimer.

The protein localises to the cytoplasm. It carries out the reaction XMP + diphosphate = xanthine + 5-phospho-alpha-D-ribose 1-diphosphate. The protein operates within purine metabolism; XMP biosynthesis via salvage pathway; XMP from xanthine: step 1/1. Functionally, converts the preformed base xanthine, a product of nucleic acid breakdown, to xanthosine 5'-monophosphate (XMP), so it can be reused for RNA or DNA synthesis. This Staphylococcus saprophyticus subsp. saprophyticus (strain ATCC 15305 / DSM 20229 / NCIMB 8711 / NCTC 7292 / S-41) protein is Xanthine phosphoribosyltransferase.